The sequence spans 192 residues: Probable cobalt-precorrin-6B C(15)-methyltransferase (decarboxylating) (192 aa).

Residues threonine 20, 44–48 (GSGTG), glutamate 68, and alanine 96 each bind S-adenosyl-L-methionine.

The protein belongs to the methyltransferase superfamily. Archaeal-type CbiT family.

The catalysed reaction is Co-precorrin-6B + S-adenosyl-L-methionine = Co-precorrin-7 + S-adenosyl-L-homocysteine + CO2. The protein operates within cofactor biosynthesis; adenosylcobalamin biosynthesis; cob(II)yrinate a,c-diamide from sirohydrochlorin (anaerobic route): step 8/10. Catalyzes the methylation of C-15 in cobalt-precorrin-6B followed by the decarboxylation of C-12 to form cobalt-precorrin-7. In Sulfolobus acidocaldarius (strain ATCC 33909 / DSM 639 / JCM 8929 / NBRC 15157 / NCIMB 11770), this protein is Probable cobalt-precorrin-6B C(15)-methyltransferase (decarboxylating).